Reading from the N-terminus, the 228-residue chain is Small ribosomal subunit protein uS2c (228 aa).

This sequence belongs to the universal ribosomal protein uS2 family.

Its subcellular location is the plastid. The protein localises to the chloroplast. The polypeptide is Small ribosomal subunit protein uS2c (rps2) (Mesostigma viride (Green alga)).